Reading from the N-terminus, the 1072-residue chain is Integrator complex subunit 3 homolog (1072 aa).

Disordered stretches follow at residues 920-943 and 1002-1072; these read YPSSSPNKRKRPPKGISVSTSTPS and DTTV…NDSD. Phosphoserine occurs at positions 1042, 1043, 1047, and 1048.

This sequence belongs to the Integrator subunit 3 family. Belongs to the multiprotein complex Integrator, at least composed of IntS1, IntS2, IntS3, IntS4, omd/IntS5, IntS6, defl/IntS7, IntS8, IntS9, IntS10, IntS11, IntS12, asun/IntS13, IntS14 and IntS15. The core complex associates with protein phosphatase 2A subunits mts/PP2A and Pp2A-29B, to form the Integrator-PP2A (INTAC) complex.

Its subcellular location is the nucleus. It is found in the cytoplasm. Functionally, component of the integrator complex, a multiprotein complex that terminates RNA polymerase II (Pol II) transcription in the promoter-proximal region of genes. The integrator complex provides a quality checkpoint during transcription elongation by driving premature transcription termination of transcripts that are unfavorably configured for transcriptional elongation: the complex terminates transcription by (1) catalyzing dephosphorylation of the C-terminal domain (CTD) of Pol II subunit Polr2A/Rbp1 and Spt5, and (2) degrading the exiting nascent RNA transcript via endonuclease activity. The integrator complex is also involved in the 3'-end processing of the U7 snRNA, and also the spliceosomal snRNAs U1, U2, U4 and U5. The polypeptide is Integrator complex subunit 3 homolog (IntS3) (Drosophila yakuba (Fruit fly)).